The following is a 327-amino-acid chain: Undecaprenyl-phosphate 4-deoxy-4-formamido-L-arabinose transferase (327 aa).

A run of 2 helical transmembrane segments spans residues 235–255 (LLSLVGSAIALLGFTFSVLLV) and 270–290 (VFTLFAVLFMFIGAQFVGMGL).

Belongs to the glycosyltransferase 2 family.

It localises to the cell inner membrane. It carries out the reaction UDP-4-deoxy-4-formamido-beta-L-arabinose + di-trans,octa-cis-undecaprenyl phosphate = 4-deoxy-4-formamido-alpha-L-arabinopyranosyl di-trans,octa-cis-undecaprenyl phosphate + UDP. Its pathway is glycolipid biosynthesis; 4-amino-4-deoxy-alpha-L-arabinose undecaprenyl phosphate biosynthesis; 4-amino-4-deoxy-alpha-L-arabinose undecaprenyl phosphate from UDP-4-deoxy-4-formamido-beta-L-arabinose and undecaprenyl phosphate: step 1/2. It functions in the pathway bacterial outer membrane biogenesis; lipopolysaccharide biosynthesis. In terms of biological role, catalyzes the transfer of 4-deoxy-4-formamido-L-arabinose from UDP to undecaprenyl phosphate. The modified arabinose is attached to lipid A and is required for resistance to polymyxin and cationic antimicrobial peptides. This Yersinia pseudotuberculosis serotype IB (strain PB1/+) protein is Undecaprenyl-phosphate 4-deoxy-4-formamido-L-arabinose transferase.